A 360-amino-acid chain; its full sequence is Ribosomal RNA large subunit methyltransferase M (360 aa).

Residues Ser190, 223–226 (CPGG), Asp242, Asp262, and Asp280 each bind S-adenosyl-L-methionine. The Proton acceptor role is filled by Lys309.

It belongs to the class I-like SAM-binding methyltransferase superfamily. RNA methyltransferase RlmE family. RlmM subfamily. In terms of assembly, monomer.

It localises to the cytoplasm. It catalyses the reaction cytidine(2498) in 23S rRNA + S-adenosyl-L-methionine = 2'-O-methylcytidine(2498) in 23S rRNA + S-adenosyl-L-homocysteine + H(+). Its function is as follows. Catalyzes the 2'-O-methylation at nucleotide C2498 in 23S rRNA. The polypeptide is Ribosomal RNA large subunit methyltransferase M (Haemophilus ducreyi (strain 35000HP / ATCC 700724)).